We begin with the raw amino-acid sequence, 213 residues long: RNA polymerase I subunit H (213 aa).

A compositionally biased stretch (basic and acidic residues) spans 1–19; sequence MVERMKKDTGDETKTKVQE. Residues 1-70 form a disordered region; sequence MVERMKKDTG…AREFTDKPWR (70 aa). Pro residues predominate over residues 21–31; it reads PPSPSPPPPPP. Basic and acidic residues-rich tracts occupy residues 43–53 and 60–69; these read VPEREKKQIER and HAREFTDKPW.

In terms of tissue distribution, expressed during spermatogenesis, initially at pachytene stage with abundance increasing in round spermatids and decreasing again during spermatid elongation.

May be involved in male sterility. This is RNA polymerase I subunit H from Mus musculus (Mouse).